A 434-amino-acid polypeptide reads, in one-letter code: Alpha-enolase (434 aa).

Ser-40 contacts Mg(2+). The substrate site is built by His-158 and Glu-167. Glu-210 functions as the Proton donor in the catalytic mechanism. The Mg(2+) site is built by Asp-245, Glu-293, and Asp-318. Glu-293 and Asp-318 together coordinate substrate. Lys-343 functions as the Proton acceptor in the catalytic mechanism. Substrate is bound by residues 370–373 (SHRS) and Lys-394.

Belongs to the enolase family. Homodimer. Mg(2+) serves as cofactor.

The protein resides in the cytoplasm. The enzyme catalyses (2R)-2-phosphoglycerate = phosphoenolpyruvate + H2O. It functions in the pathway carbohydrate degradation; glycolysis; pyruvate from D-glyceraldehyde 3-phosphate: step 4/5. The protein is Alpha-enolase (ENO1) of Gallus gallus (Chicken).